Consider the following 202-residue polypeptide: Small ribosomal subunit protein uS4 (202 aa).

One can recognise an S4 RNA-binding domain in the interval M90–N152.

It belongs to the universal ribosomal protein uS4 family. In terms of assembly, part of the 30S ribosomal subunit. Contacts protein S5. The interaction surface between S4 and S5 is involved in control of translational fidelity.

One of the primary rRNA binding proteins, it binds directly to 16S rRNA where it nucleates assembly of the body of the 30S subunit. Its function is as follows. With S5 and S12 plays an important role in translational accuracy. This chain is Small ribosomal subunit protein uS4, found in Thermosynechococcus vestitus (strain NIES-2133 / IAM M-273 / BP-1).